The following is a 350-amino-acid chain: Deoxyhypusine synthase-like protein (350 aa).

The protein belongs to the deoxyhypusine synthase family.

This chain is Deoxyhypusine synthase-like protein, found in Chlorobaculum tepidum (strain ATCC 49652 / DSM 12025 / NBRC 103806 / TLS) (Chlorobium tepidum).